The sequence spans 289 residues: 33 kDa chaperonin (289 aa).

Intrachain disulfides connect Cys237–Cys239 and Cys270–Cys273.

The protein belongs to the HSP33 family. Under oxidizing conditions two disulfide bonds are formed involving the reactive cysteines. Under reducing conditions zinc is bound to the reactive cysteines and the protein is inactive.

Its subcellular location is the cytoplasm. Functionally, redox regulated molecular chaperone. Protects both thermally unfolding and oxidatively damaged proteins from irreversible aggregation. Plays an important role in the bacterial defense system toward oxidative stress. The sequence is that of 33 kDa chaperonin from Oceanobacillus iheyensis (strain DSM 14371 / CIP 107618 / JCM 11309 / KCTC 3954 / HTE831).